Reading from the N-terminus, the 446-residue chain is tRNA modification GTPase MnmE (446 aa).

3 residues coordinate (6S)-5-formyl-5,6,7,8-tetrahydrofolate: R22, E80, and R119. The TrmE-type G domain maps to 215-370; it reads GFKVAIIGKP…LILALENIMN (156 aa). N225 provides a ligand contact to K(+). GTP-binding positions include 225-230, 244-250, and 269-272; these read NVGKSS, SDIAGTT, and DTAG. S229 serves as a coordination point for Mg(2+). Positions 244, 246, and 249 each coordinate K(+). T250 is a binding site for Mg(2+). K446 is a (6S)-5-formyl-5,6,7,8-tetrahydrofolate binding site.

This sequence belongs to the TRAFAC class TrmE-Era-EngA-EngB-Septin-like GTPase superfamily. TrmE GTPase family. As to quaternary structure, homodimer. Heterotetramer of two MnmE and two MnmG subunits. Requires K(+) as cofactor.

It localises to the cytoplasm. Its function is as follows. Exhibits a very high intrinsic GTPase hydrolysis rate. Involved in the addition of a carboxymethylaminomethyl (cmnm) group at the wobble position (U34) of certain tRNAs, forming tRNA-cmnm(5)s(2)U34. This is tRNA modification GTPase MnmE from Sulfurimonas denitrificans (strain ATCC 33889 / DSM 1251) (Thiomicrospira denitrificans (strain ATCC 33889 / DSM 1251)).